Here is a 78-residue protein sequence, read N- to C-terminus: Acyl carrier protein (78 aa).

In terms of domain architecture, Carrier spans 2–77 (SDVLERVSKI…DAVKFISEKV (76 aa)). S37 carries the O-(pantetheine 4'-phosphoryl)serine modification.

The protein belongs to the acyl carrier protein (ACP) family. Post-translationally, 4'-phosphopantetheine is transferred from CoA to a specific serine of apo-ACP by AcpS. This modification is essential for activity because fatty acids are bound in thioester linkage to the sulfhydryl of the prosthetic group.

The protein resides in the cytoplasm. The protein operates within lipid metabolism; fatty acid biosynthesis. Carrier of the growing fatty acid chain in fatty acid biosynthesis. The polypeptide is Acyl carrier protein (Maricaulis maris (strain MCS10) (Caulobacter maris)).